We begin with the raw amino-acid sequence, 99 residues long: MGECPHLVDVRLGHRSLATGPEQSDICHTGSEARWTTTWYGSLSFSRHKYKMLADLTPGVEMSCRHWARWLTPVIPALWKAEAGGLPELRSSRPAWTTW.

As to quaternary structure, interacts with TSPO, IGHM and IGHD. Expressed in the heart, kidney, liver, pancreas, small intestine, ovary, testis, prostate and thymus. Expressed in all of the cancer cell lines tested.

It localises to the cytoplasm. It is found in the microsome membrane. Its subcellular location is the endoplasmic reticulum membrane. May be involved in cell survival, proliferation and progression of cancer cells. The polypeptide is Protein MOST-1 (C8orf17) (Homo sapiens (Human)).